The primary structure comprises 124 residues: Small ribosomal subunit protein uS12 (124 aa).

The segment at 1–30 (MPTIQQLVRKGRRDKVAKVKTAALKGSPQR) is disordered. Position 89 is a 3-methylthioaspartic acid (D89). Positions 105–124 (QGVKNRKQARSRYGAKKEKS) are disordered. Residues 108-118 (KNRKQARSRYG) show a composition bias toward basic residues.

The protein belongs to the universal ribosomal protein uS12 family. In terms of assembly, part of the 30S ribosomal subunit. Contacts proteins S8 and S17. May interact with IF1 in the 30S initiation complex.

In terms of biological role, with S4 and S5 plays an important role in translational accuracy. Its function is as follows. Interacts with and stabilizes bases of the 16S rRNA that are involved in tRNA selection in the A site and with the mRNA backbone. Located at the interface of the 30S and 50S subunits, it traverses the body of the 30S subunit contacting proteins on the other side and probably holding the rRNA structure together. The combined cluster of proteins S8, S12 and S17 appears to hold together the shoulder and platform of the 30S subunit. This Mycobacterium intracellulare protein is Small ribosomal subunit protein uS12.